The sequence spans 184 residues: UPS-like protein C36.10 (184 aa).

One can recognise a PRELI/MSF1 domain in the interval 1–172 (MKIFESCHLF…VLEKINMSVF (172 aa)).

This sequence belongs to the slowmo family.

The protein resides in the cytoplasm. The protein localises to the mitochondrion inner membrane. It localises to the mitochondrion intermembrane space. In terms of biological role, required for mitochondrial morphology. May control phospholipid metabolism in the mitochondrial intermembrane space. This Schizosaccharomyces pombe (strain 972 / ATCC 24843) (Fission yeast) protein is UPS-like protein C36.10.